The primary structure comprises 66 residues: Phylloseptin-H9 (66 aa).

The signal sequence occupies residues 1–22 (MAFLKKSLFLVLFLGLVSLSIC). Positions 23-44 (EEEKRETEEEENDQEEDDKSEE) are excised as a propeptide. The segment at 24–44 (EEKRETEEEENDQEEDDKSEE) is disordered. A compositionally biased stretch (acidic residues) spans 30-41 (EEEENDQEEDDK). Leu-65 bears the Leucine amide mark.

In terms of tissue distribution, expressed by the skin glands.

The protein resides in the secreted. Its function is as follows. Has antimicrobial activity. This chain is Phylloseptin-H9, found in Pithecopus hypochondrialis (Orange-legged leaf frog).